The following is a 183-amino-acid chain: Adenine phosphoribosyltransferase (183 aa).

This sequence belongs to the purine/pyrimidine phosphoribosyltransferase family. Homodimer.

It localises to the cytoplasm. It catalyses the reaction AMP + diphosphate = 5-phospho-alpha-D-ribose 1-diphosphate + adenine. The protein operates within purine metabolism; AMP biosynthesis via salvage pathway; AMP from adenine: step 1/1. Catalyzes a salvage reaction resulting in the formation of AMP, that is energically less costly than de novo synthesis. This chain is Adenine phosphoribosyltransferase, found in Escherichia fergusonii (strain ATCC 35469 / DSM 13698 / CCUG 18766 / IAM 14443 / JCM 21226 / LMG 7866 / NBRC 102419 / NCTC 12128 / CDC 0568-73).